The sequence spans 260 residues: Segregation and condensation protein A (260 aa).

It belongs to the ScpA family. As to quaternary structure, component of a cohesin-like complex composed of ScpA, ScpB and the Smc homodimer, in which ScpA and ScpB bind to the head domain of Smc. The presence of the three proteins is required for the association of the complex with DNA.

Its subcellular location is the cytoplasm. Its function is as follows. Participates in chromosomal partition during cell division. May act via the formation of a condensin-like complex containing Smc and ScpB that pull DNA away from mid-cell into both cell halves. The polypeptide is Segregation and condensation protein A (Halalkalibacterium halodurans (strain ATCC BAA-125 / DSM 18197 / FERM 7344 / JCM 9153 / C-125) (Bacillus halodurans)).